Here is a 951-residue protein sequence, read N- to C-terminus: WD repeat-containing and planar cell polarity effector protein fritz (951 aa).

WD repeat units lie at residues 304 to 343 (PMGA…TKYA) and 345 to 384 (QIEI…IGHQ). Polar residues-rich tracts occupy residues 709-720 (TLKSNSSLQQAP), 757-771 (IPDQ…STMP), and 818-828 (SILSNPANPAP). 3 disordered regions span residues 709–776 (TLKS…SPPP), 816–883 (TASI…AARH), and 903–951 (EYLK…FGVV). The segment covering 930 to 942 (SSKGGNSSSSSSS) has biased composition (low complexity).

It belongs to the WD repeat fritz family.

Its subcellular location is the cell membrane. The protein resides in the cytoplasm. The protein localises to the cytoskeleton. It is found in the cilium axoneme. Probable effector of the planar cell polarity signaling pathway which regulates the septin cytoskeleton in both ciliogenesis and collective cell movements. Functions cell autonomously to regulate wing cell hair polarity and number. In Drosophila melanogaster (Fruit fly), this protein is WD repeat-containing and planar cell polarity effector protein fritz (frtz).